The primary structure comprises 95 residues: Integration host factor subunit beta (95 aa).

This sequence belongs to the bacterial histone-like protein family. Heterodimer of an alpha and a beta chain.

Its function is as follows. This protein is one of the two subunits of integration host factor, a specific DNA-binding protein that functions in genetic recombination as well as in transcriptional and translational control. The protein is Integration host factor subunit beta of Shewanella halifaxensis (strain HAW-EB4).